Consider the following 531-residue polypeptide: MGNILEEIAAQRRLDVAAAKQVVSTDDLAKKIEHTESVYGPALPVLERLNAPAEQVQAYANAGASMISVLTEPKWFKGSLDDMMEAREVVEGMSQRPAILRKDFIIDVYQLLEARAYGADCVLLIVTLLSKEQLIELIDATHNLGMCALVEVNSVQELDIALAAKARLIGVNNRDLRTFKVDMNTTARVADAIRERGLSLGRDGVALFALSGIRSHTDVVKYEKCGARGILVGEYLMKSGDIATTVKDLLQNVTRHSESGEFALLPPLAKVCGITTVEYALAALRNGANMIGIIMAEHSPRYVEKEEAKAIAKAVREYGERTGPILSDILESHLDDKSDWFHRNVLALREACSRAPLVVGVFVNKTATEMNAAAEEIGLDLVQLHGDEGFEICKDIKYPTIRALHLPDTAQCDGVDAEAVLQQVSEGLANYILLDTTVKGQQGGTGVAFDWKIAAIFTQARLPCLMAGGLTPENVVKALSVGHPVGVDVSSGVEVKGSPGVKDLDKVAAFLKAVKDHLSVATLKIDEETEN.

The interval 1 to 254 is indole-3-glycerol phosphate synthase; sequence MGNILEEIAA…TVKDLLQNVT (254 aa). The segment at 255-531 is N-(5'-phosphoribosyl)anthranilate isomerase; it reads RHSESGEFAL…TLKIDEETEN (277 aa).

This sequence in the N-terminal section; belongs to the TrpC family. The protein in the C-terminal section; belongs to the TrpF family.

It carries out the reaction N-(5-phospho-beta-D-ribosyl)anthranilate = 1-(2-carboxyphenylamino)-1-deoxy-D-ribulose 5-phosphate. It catalyses the reaction 1-(2-carboxyphenylamino)-1-deoxy-D-ribulose 5-phosphate + H(+) = (1S,2R)-1-C-(indol-3-yl)glycerol 3-phosphate + CO2 + H2O. The protein operates within amino-acid biosynthesis; L-tryptophan biosynthesis; L-tryptophan from chorismate: step 3/5. It participates in amino-acid biosynthesis; L-tryptophan biosynthesis; L-tryptophan from chorismate: step 4/5. In terms of biological role, bifunctional enzyme that catalyzes two sequential steps of tryptophan biosynthetic pathway. The chain is Tryptophan biosynthesis protein TRP1 (TRP1) from Phytophthora nicotianae (Potato buckeye rot agent).